Consider the following 576-residue polypeptide: Peroxisomal targeting signal receptor (576 aa).

Cysteine 10 participates in a covalent cross-link: Glycyl cysteine thioester (Cys-Gly) (interchain with G-Cter in ubiquitin). The interval 11 to 33 (AAGSNPLAQFTKHTQHDTSLQQS) is amphipathic helix 1 (AH1). Lysine 22 is covalently cross-linked (Glycyl lysine isopeptide (Lys-Gly) (interchain with G-Cter in ubiquitin)). An amphipathic helix 2 (AH2) region spans residues 58–75 (RQQMDQFMQQQNNPAFNF). Short sequence motifs (wxxxF/Y motif) lie at residues 100 to 104 (WNQEF) and 128 to 132 (WAQDF). Residues 176-195 (AQMQQQNPAQAQTSEQSQTQ) form a disordered region. Residues 196 to 200 (WEDQF) carry the WxxxF/Y motif 3 motif. Positions 224-240 (FEQVWDDIQVSYADVEL) are amphipathic helix 4 (AH4). Positions 249–253 (WEKDF) match the WxxxF/Y motif 4 motif. 7 TPR repeats span residues 278-311 (PDAY…DPKH), 312-345 (VDAW…DPTN), 346-383 (LAAL…IASR), 384-421 (ARSS…ASMD), 422-455 (ADVQ…EPDK), 456-489 (ALNW…NPNF), and 490-523 (VRAR…HEVE).

The protein belongs to the peroxisomal targeting signal receptor family. As to quaternary structure, interacts (via WxxxF/Y and LVxEF motifs) with PEX14; promoting translocation through the PEX13-PEX14 docking complex. Interacts with PEX8. In terms of processing, a disulfide bond is created between Cys-10 and Cys-338 or Cys-444. Post-translationally, monoubiquitinated at Cys-10 by PEX2 during PEX5 passage through the retrotranslocation channel: monoubiquitination acts as a signal for PEX5 extraction and is required for proper export from peroxisomes and recycling. When PEX5 recycling is compromised, polyubiquitinated at Lys-22 by PEX10 during its passage through the retrotranslocation channel, leading to its degradation.

The protein localises to the peroxisome membrane. The protein resides in the cytoplasm. Its subcellular location is the cytosol. It localises to the peroxisome matrix. In terms of biological role, receptor that mediates peroxisomal import of proteins containing a C-terminal PTS1-type tripeptide peroxisomal targeting signal (SKL-type). Binds to cargo proteins containing a PTS1 peroxisomal targeting signal in the cytosol, and translocates them into the peroxisome matrix by passing through the peroxisomal docking complex along with cargo proteins. PEX5 receptor is then retrotranslocated into the cytosol, leading to release of bound cargo in the peroxisome matrix, and reset for a subsequent peroxisome import cycle. Required for PEX7 ubiquitination. The protein is Peroxisomal targeting signal receptor of Komagataella phaffii (strain GS115 / ATCC 20864) (Yeast).